The following is a 103-amino-acid chain: Small ubiquitin-related modifier 3 (103 aa).

Residues K5 and K7 each participate in a glycyl lysine isopeptide (Lys-Gly) (interchain with G-Cter in SUMO2) cross-link. Residue K11 forms a Glycyl lysine isopeptide (Lys-Gly) (interchain with G-Cter in SUMO); alternate linkage. K11 participates in a covalent cross-link: Glycyl lysine isopeptide (Lys-Gly) (interchain with G-Cter in SUMO2); alternate. Positions 15–92 constitute a Ubiquitin-like domain; that stretch reads DHINLKVAGQ…IDVFQQQTGG (78 aa). A Glycyl lysine isopeptide (Gly-Lys) (interchain with K-? in acceptor proteins) cross-link involves residue G92. The propeptide occupies 93–103; it reads VPESSLAGHSF.

This sequence belongs to the ubiquitin family. SUMO subfamily. Covalently attached to a number of proteins. Interacts with BMAL1. Interacts with USP25 (via ts SIM domain); the interaction sumoylates USP25 and inhibits its ubiquitin hydrolyzing activity. Interacts with SAE2 and UBE2I. Post-translationally, polymeric chains can be formed through Lys-11 cross-linking. Cleavage of precursor form by SENP1, SENP2 or SENP5 is necessary for function. Expressed predominantly in liver.

Its subcellular location is the cytoplasm. It localises to the nucleus. It is found in the PML body. Ubiquitin-like protein which can be covalently attached to target lysines either as a monomer or as a lysine-linked polymer. Does not seem to be involved in protein degradation and may function as an antagonist of ubiquitin in the degradation process. Plays a role in a number of cellular processes such as nuclear transport, DNA replication and repair, mitosis and signal transduction. Covalent attachment to its substrates requires prior activation by the E1 complex SAE1-SAE2 and linkage to the E2 enzyme UBE2I, and can be promoted by an E3 ligase such as PIAS1-4, RANBP2 or CBX4. Plays a role in the regulation of sumoylation status of SETX. This Homo sapiens (Human) protein is Small ubiquitin-related modifier 3.